Here is a 498-residue protein sequence, read N- to C-terminus: MEKHIDILIVGAGISGIGIAAHLSKDAPQRQFEIIERRENIGGTWDLFRYPGIRSDSDMSTFGFNFKPWQSPNVLASGSSIKGYLSEVVDEYDLKKKIHFKHRVLAANYDTASKKWYVEIEDAAQKKQTWIANFIVGCTGYYNYDQGFEPDFPNKDAFKGQFIHPQHWPENLDYVGKKVVIIGSGATAITLVPAMSKGGAEHVTMLQRSPTYIASIPSIDFVYDKMRKVLPEDLAYKLTRARNIGVQRGIYTLSQKQPKLVRKFLLKSIEMQLKGKVDMKHFTPSYNPWDQRLCVVPDGDLFKILRSGQASVETDQIEKFTETGIQLKSGKHLDADIVVSATGLEIQILGGIKGTIDGQPLDTSKSMLYQGVMVSDVPNMAMIIGYINASWTLKVDVAADYICRLLNYMDKQGYDEVIPEGDQTELMEDTVMGSLTSGYIARAANVMPKQGKHAPWKVTNNYLADRKALKNARFDDGVLHFDKKTDTVERKTKPKLVS.

A helical transmembrane segment spans residues 4–24; the sequence is HIDILIVGAGISGIGIAAHLS. FAD-binding residues include serine 15, glutamate 36, aspartate 56, phenylalanine 62, and valine 104. 54-56 provides a ligand contact to NADP(+); that stretch reads RSD. NADP(+) is bound by residues 184 to 190, 208 to 209, and 292 to 293; these read SGATAIT, RS, and RL. Residue valine 395 coordinates FAD.

Belongs to the FAD-binding monooxygenase family. It depends on FAD as a cofactor.

The protein resides in the cell membrane. It participates in hydrocarbon metabolism; alkane degradation. Functionally, is able to catalyze the degradation of n-alkanes with C chain lengths of 32 and 36. Probably allows Acinetobacter baylyi strain ADP1 to grow on the long-chain n-alkane dotriacontane (C32H66) as a sole carbon source. The sequence is that of Probable FAD-binding monooxygenase AlmA from Acinetobacter baylyi (strain ATCC 33305 / BD413 / ADP1).